The chain runs to 194 residues: NAD(P)H-quinone oxidoreductase subunit I (194 aa).

4Fe-4S ferredoxin-type domains lie at 55-84 (GRIHYEFDKCIACEVCVRVCPINLPVVDWE) and 95-124 (NHYSIDFGVCIFCGNCVEYCPTNCLSMTEE). 8 residues coordinate [4Fe-4S] cluster: Cys64, Cys67, Cys70, Cys74, Cys104, Cys107, Cys110, and Cys114. Residues 173-194 (DLPANAPRPGARPEDLVEKTEA) form a disordered region. Residues 183 to 194 (ARPEDLVEKTEA) are compositionally biased toward basic and acidic residues.

Belongs to the complex I 23 kDa subunit family. In terms of assembly, NDH-1 is composed of at least 11 different subunits. It depends on [4Fe-4S] cluster as a cofactor.

The protein resides in the cellular thylakoid membrane. It catalyses the reaction a plastoquinone + NADH + (n+1) H(+)(in) = a plastoquinol + NAD(+) + n H(+)(out). The catalysed reaction is a plastoquinone + NADPH + (n+1) H(+)(in) = a plastoquinol + NADP(+) + n H(+)(out). NDH-1 shuttles electrons from an unknown electron donor, via FMN and iron-sulfur (Fe-S) centers, to quinones in the respiratory and/or the photosynthetic chain. The immediate electron acceptor for the enzyme in this species is believed to be plastoquinone. Couples the redox reaction to proton translocation, and thus conserves the redox energy in a proton gradient. The polypeptide is NAD(P)H-quinone oxidoreductase subunit I (Nostoc sp. (strain PCC 7120 / SAG 25.82 / UTEX 2576)).